Consider the following 331-residue polypeptide: Neuropeptides B/W receptor type 1 (331 aa).

The Extracellular segment spans residues 1-43 (MHNASYWGPERANTSCPAPAPTLGCPNASGPAPPLPPPLAVAV). N-linked (GlcNAc...) asparagine glycosylation is found at Asn-3, Asn-13, and Asn-27. A helical membrane pass occupies residues 44–66 (PVVYAVICAVGLAGNSAVLFVLL). The Cytoplasmic portion of the chain corresponds to 67-75 (RAPRRKTVT). A helical transmembrane segment spans residues 76–100 (NLFILNLAVADELFTLVPPVNIADF). Topologically, residues 101–115 (LLRRWPFGELLCKLV) are extracellular. A disulfide bridge connects residues Cys-112 and Cys-191. Residues 116-135 (VAVDQYNTFSSLYFLTVMSA) form a helical membrane-spanning segment. Topologically, residues 136–160 (DRYLVVLATAESRRVAGRTYGAARA) are cytoplasmic. The helical transmembrane segment at 161-180 (VSLAVWGVATLVVLPFAVFA) threads the bilayer. At 181–205 (RLDEEQGRRQCVLVFPQPEALWWRA) the chain is on the extracellular side. A helical transmembrane segment spans residues 206–227 (SRLYTLVLGFAIPVSTICVLYT). Residues 228–251 (SLLCRLRAIRLDSHAKALDRAKKR) are Cytoplasmic-facing. Residues 252–276 (VTVLVVAILAVCLLVWTPYHLSTVV) form a helical membrane-spanning segment. Topologically, residues 277–286 (ALTTDLPQTP) are extracellular. The chain crosses the membrane as a helical span at residues 287–301 (LVIAVSYFITSLSYA). Over 302–331 (NSCLNPFLYAFLDDSFRRSLRQLLACRTTS) the chain is Cytoplasmic.

It belongs to the G-protein coupled receptor 1 family.

The protein localises to the cell membrane. Its function is as follows. Interacts specifically with a number of opioid ligands. Receptor for neuropeptides B and W, which may be involved in neuroendocrine system regulation, food intake and the organization of other signals. The polypeptide is Neuropeptides B/W receptor type 1 (NPBWR1) (Bos taurus (Bovine)).